A 542-amino-acid polypeptide reads, in one-letter code: Protein NODULATION SIGNALING PATHWAY 1 (542 aa).

The segment at Thr-73–Glu-150 is disordered. Residues Leu-92 to Ser-103 show a composition bias toward basic and acidic residues. Residues Ala-136 to Ser-148 are compositionally biased toward low complexity. The 388-residue stretch at Ser-145–Lys-532 folds into the GRAS domain. A leucine repeat I (LRI) region spans residues Arg-152–Thr-214. The VHIID stretch occupies residues Leu-233–Gly-332. The VHIID motif lies at Leu-269–Asp-273. The leucine repeat II (LRII) stretch occupies residues Tyr-333–Gln-357. The interval Leu-367–Glu-452 is PFYRE. The segment at Ala-455–Lys-532 is SAW.

The protein belongs to the GRAS family. In terms of tissue distribution, highly expressed in roots.

The protein resides in the nucleus. In terms of biological role, transcriptional regulator essential for Nod-factor-induced gene expression. Acts downstream of calcium spiking and a calcium/calmodulin-dependent protein kinase required for activation of early nodulation gene expression. Acts as a common symbiosis gene that positively contributes to the early steps of the arbuscular mycorrhizal fungus and rhizobial infection processes in roots. Transcription factor involved in the positive regulation of the beta-carotene isomerase D27, which participates in a pathway leading to biosynthesis of strigolactones in roots. This chain is Protein NODULATION SIGNALING PATHWAY 1, found in Lotus japonicus (Lotus corniculatus var. japonicus).